Consider the following 228-residue polypeptide: Lactate utilization protein A (228 aa).

It belongs to the LutA/YkgE family.

Functionally, is involved in L-lactate degradation and allows cells to grow with lactate as the sole carbon source. The polypeptide is Lactate utilization protein A (Lysinibacillus sphaericus (strain C3-41)).